The chain runs to 199 residues: Small ribosomal subunit protein uS4 (199 aa).

Positions 91–154 (SRLDNVVYRL…KDLIIVKEAL (64 aa)) constitute an S4 RNA-binding domain.

This sequence belongs to the universal ribosomal protein uS4 family. In terms of assembly, part of the 30S ribosomal subunit. Contacts protein S5. The interaction surface between S4 and S5 is involved in control of translational fidelity.

Its function is as follows. One of the primary rRNA binding proteins, it binds directly to 16S rRNA where it nucleates assembly of the body of the 30S subunit. With S5 and S12 plays an important role in translational accuracy. This Phytoplasma mali (strain AT) protein is Small ribosomal subunit protein uS4.